The primary structure comprises 865 residues: Anaphase-promoting complex subunit 6 (865 aa).

TPR repeat units follow at residues Ile11 to Val42, Ser46 to Lys75, and Glu88 to Leu149. Residues Asn153 to Phe293 form a disordered region. The segment covering Asn183–Lys202 has biased composition (acidic residues). Positions Asn249 to Asn292 are enriched in low complexity. TPR repeat units lie at residues Ile300–Thr331, Phe336–Lys359, Asp366–Thr438, Asp478–Gln506, Cys515–Ser542, Ala573–Leu602, Gly607–Arg635, Leu642–Ile670, and Pro675–Ser709. Residues Ser403–Asn434 show a composition bias toward low complexity. Residues Ser403–Ile436 form a disordered region. A disordered region spans residues Gly738–Ser767. TPR repeat units lie at residues Glu777–Leu809 and Pro814–Ile843.

Belongs to the APC6/CDC16 family. In terms of assembly, the APC/C is composed of at least 13 subunits that stay tightly associated throughout the cell cycle: anapc1, anapc2, anapc3, anapc4, anapc5, anapc6, anapc7, anapc8, anapc10, anapc11, cdc20, cdc26 and cdh1.

Its subcellular location is the nucleus. The protein operates within protein modification; protein ubiquitination. Functionally, component of the anaphase promoting complex/cyclosome (APC/C), a cell cycle-regulated E3 ubiquitin-protein ligase complex that controls progression through mitosis and the G1 phase of the cell cycle. The protein is Anaphase-promoting complex subunit 6 (anapc6) of Dictyostelium discoideum (Social amoeba).